The sequence spans 411 residues: S-adenosylmethionine synthase (411 aa).

An ATP-binding site is contributed by histidine 15. Residue aspartate 17 coordinates Mg(2+). Glutamate 43 is a K(+) binding site. L-methionine is bound by residues glutamate 56 and glutamine 99. The interval 99–109 (QSPDIAQGVDT) is flexible loop. ATP-binding positions include 174–176 (DGK), 247–248 (RF), aspartate 256, 262–263 (RK), alanine 279, and lysine 283. Aspartate 256 contributes to the L-methionine binding site. Lysine 287 is a binding site for L-methionine.

Belongs to the AdoMet synthase family. In terms of assembly, homotetramer; dimer of dimers. Mg(2+) serves as cofactor. Requires K(+) as cofactor.

It localises to the cytoplasm. It carries out the reaction L-methionine + ATP + H2O = S-adenosyl-L-methionine + phosphate + diphosphate. The protein operates within amino-acid biosynthesis; S-adenosyl-L-methionine biosynthesis; S-adenosyl-L-methionine from L-methionine: step 1/1. Its function is as follows. Catalyzes the formation of S-adenosylmethionine (AdoMet) from methionine and ATP. The overall synthetic reaction is composed of two sequential steps, AdoMet formation and the subsequent tripolyphosphate hydrolysis which occurs prior to release of AdoMet from the enzyme. The sequence is that of S-adenosylmethionine synthase from Streptomyces spectabilis.